We begin with the raw amino-acid sequence, 985 residues long: Regulator of telomere elongation helicase 1 homolog (985 aa).

The region spanning Ala-7–Asp-303 is the Helicase ATP-binding domain. Ser-42 to Thr-49 is a binding site for ATP. [4Fe-4S] cluster contacts are provided by Cys-146, Cys-164, Cys-173, and Cys-209. The DEAH box motif lies at Asp-252 to His-255. At Thr-874 the chain carries Phosphothreonine.

It belongs to the helicase family. RAD3/XPD subfamily.

It is found in the nucleus. The enzyme catalyses ATP + H2O = ADP + phosphate + H(+). In terms of biological role, a probable ATP-dependent DNA helicase implicated in DNA repair and the maintenance of genomic stability. Acts as an anti-recombinase to counteract toxic recombination and limit crossover during meiosis. Regulates meiotic recombination and crossover homeostasis by physically dissociating strand invasion events and thereby promotes noncrossover repair by meiotic synthesis dependent strand annealing (SDSA) as well as disassembly of D loop recombination intermediates. In Drosophila erecta (Fruit fly), this protein is Regulator of telomere elongation helicase 1 homolog.